The sequence spans 85 residues: Large ribosomal subunit protein bL27 (85 aa).

Residues 1 to 24 (MAHKKAGGSSRNGRDSNSKRLGVK) are disordered.

Belongs to the bacterial ribosomal protein bL27 family.

In Nitrosospira multiformis (strain ATCC 25196 / NCIMB 11849 / C 71), this protein is Large ribosomal subunit protein bL27.